The primary structure comprises 185 residues: Ribosome-recycling factor (185 aa).

Residues 143 to 163 form a disordered region; it reads EKEKLISEDDNKKGMDDIQKE.

The protein belongs to the RRF family.

The protein localises to the cytoplasm. Its function is as follows. Responsible for the release of ribosomes from messenger RNA at the termination of protein biosynthesis. May increase the efficiency of translation by recycling ribosomes from one round of translation to another. In Syntrophomonas wolfei subsp. wolfei (strain DSM 2245B / Goettingen), this protein is Ribosome-recycling factor.